Consider the following 612-residue polypeptide: Baeyer-Villiger monooxygenase 4 (612 aa).

FAD-binding positions include Glu99, Thr107–Trp110, Asp119, Tyr125, and Ala169. Position 117 to 119 (Gln117 to Asp119) interacts with NADP(+). Residues Thr253–Gln259, Arg276–Thr277, and Lys393–Arg394 contribute to the NADP(+) site.

This sequence belongs to the FAD-binding monooxygenase family. It depends on FAD as a cofactor.

Its function is as follows. Catalyzes a Baeyer-Villiger oxidation reaction, i.e. the insertion of an oxygen atom into a carbon-carbon bond adjacent to a carbonyl, which converts ketones to esters or lactones using NADPH as an electron donor. Has a broad substrate scope and oxidizes different compounds including substituted and unsubstituted alicyclic, bicyclic-, aliphatic-ketones, ketones with an aromatic moiety, and sulfides. The highest activities are measured for 2- and 3-methylcyclohexanone, phenylacetone, bicyclo[3.2.0]hept-2-en-6-one and menthone. Cannot use NADH instead of NADPH. Is not active on benzaldehyde. This Dietzia sp. (strain D5) protein is Baeyer-Villiger monooxygenase 4.